Here is a 258-residue protein sequence, read N- to C-terminus: Apolipoprotein E (258 aa).

An N-terminal signal peptide occupies residues 1–19 (MRVWTVLLGAVLLLAACQA). 3 repeat units span residues 112–133 (VDME…QVAG), 134–155 (QNLE…KRLA), and 156–173 (KDTE…KEAT). A 3 X 22 AA approximate tandem repeats region spans residues 112–173 (VDMEEAKTRV…KLEAYSKEAT (62 aa)).

Belongs to the apolipoprotein A1/A4/E family. In terms of assembly, homotetramer.

The protein resides in the secreted. It is found in the extracellular space. It localises to the extracellular matrix. In terms of biological role, APOE is an apolipoprotein, a protein associating with lipid particles, that mainly functions in lipoprotein-mediated lipid transport between organs via the plasma and interstitial fluids. APOE is a core component of plasma lipoproteins and is involved in their production, conversion and clearance. Apolipoproteins are amphipathic molecules that interact both with lipids of the lipoprotein particle core and the aqueous environment of the plasma. The protein is Apolipoprotein E (APOE) of Alligator mississippiensis (American alligator).